The sequence spans 670 residues: Thrombospondin-type laminin G domain and EAR repeat-containing protein (670 aa).

The N-terminal stretch at 1-20 (MSALLMLCAVLLLLGTPSRG) is a signal peptide. Positions 59 to 278 (GLQFSATEPR…KVTLGSRPPC (220 aa)) constitute a Laminin G-like domain. EAR repeat units lie at residues 314–359 (DYVE…KWTD), 361–409 (KFVS…KWSP), 413–461 (KFTL…RWNP), 465–513 (LFEA…IWLV), 515–571 (AFQL…ELNI), 575–623 (TFVK…RWQG), and 626–669 (GFVA…KLRT). A glycan (N-linked (GlcNAc...) asparagine) is linked at N498.

In terms of tissue distribution, in the organ of Corti, expression at postnatal day 1 (P1) is restricted to the basal region of the stereocilia of inner and outer hair cells (at protein level). Expressed in the organ of Corti at P1 and P7, in cochlear ganglion, stria vascularis and vestibular ends at P7, and in inferior colliculus, remaining brainstem, cerebellum, brain hemispheres and retina at P1, P7 and in the adult. Also detected in adult liver, lung, kidney, intestine and testis but not in heart or skeletal muscle.

It is found in the secreted. Its subcellular location is the cell surface. The protein localises to the cell projection. It localises to the stereocilium. Its function is as follows. Plays a critical role in tooth and hair follicle morphogenesis through regulation of the Notch signaling pathway. May play a role in development or function of the auditory system. This chain is Thrombospondin-type laminin G domain and EAR repeat-containing protein, found in Mus musculus (Mouse).